The sequence spans 186 residues: Glutathione-independent glyoxalase DJR-1.2 (186 aa).

Catalysis depends on residues E20, C105, and H124.

This sequence belongs to the peptidase C56 family. DJ-1 subfamily. In terms of tissue distribution, expressed in various tissues, including pharyngeal muscles, pharynx-intestinal valve, ventral nerve cord, spermatheca, rectal gland, inner labial (IL) cells of head neurons, phasmid (PHA/PHB) neurons in tail and supporting sheath/socket cells, as well as in head mesodermal cells (HMC), excretory canals and coelomocytes.

Its subcellular location is the cytoplasm. The enzyme catalyses methylglyoxal + H2O = (R)-lactate + H(+). In terms of biological role, catalyzes the conversion of methylglyoxal (MG) or glyoxal (GO) to D-lactate or glycolic acid respectively in a single glutathione (GSH)-independent step. May play a role in detoxifying endogenously produced glyoxals. Involved in protection against glyoxal-induced cell death. Protects dopaminergic neurons from glyoxal-dependent neuronal degeneration. The chain is Glutathione-independent glyoxalase DJR-1.2 from Caenorhabditis elegans.